Here is a 351-residue protein sequence, read N- to C-terminus: Divinyl chlorophyll a/b light-harvesting protein PcbC (351 aa).

A run of 6 helical transmembrane segments spans residues 27-47, 64-84, 89-109, 203-223, 244-264, and 306-326; these read FIAA…AFTL, LICL…GVIT, CTVI…GGLL, VMGG…FHIA, VLSY…FWCA, and LSNV…WHAL.

Belongs to the PsbB/PsbC family. IsiA/Pcb subfamily. The antenna complex consists of divinyl chlorophylls (a and b) and divinyl chlorophyll a/b binding proteins and binds more divinyl chlorophyll b than does the antenna complex from high-light-adapted Prochlorococcus. Divinyl chlorophyll a serves as cofactor. Divinyl chlorophyll b is required as a cofactor.

The protein resides in the cellular thylakoid membrane. Its function is as follows. The antenna complex functions as a light receptor, it captures and delivers excitation energy to photosystems II and I. The Prochlorales pcb genes are not related to higher plant LHCs. The polypeptide is Divinyl chlorophyll a/b light-harvesting protein PcbC (pcbC) (Prochlorococcus marinus (strain SARG / CCMP1375 / SS120)).